Consider the following 177-residue polypeptide: Large ribosomal subunit protein uL6 (177 aa).

Belongs to the universal ribosomal protein uL6 family. As to quaternary structure, part of the 50S ribosomal subunit.

Functionally, this protein binds to the 23S rRNA, and is important in its secondary structure. It is located near the subunit interface in the base of the L7/L12 stalk, and near the tRNA binding site of the peptidyltransferase center. In Pasteurella multocida (strain Pm70), this protein is Large ribosomal subunit protein uL6.